The chain runs to 423 residues: Galactosylceramide sulfotransferase (423 aa).

The Cytoplasmic segment spans residues 1–14 (MPLPQKKRWESMAK). A helical; Signal-anchor for type II membrane protein transmembrane segment spans residues 15-35 (GLVLGALFTSFLLLLYSYAVP). Residues 36–423 (PLYTGLASTT…WKFIRDFLRW (388 aa)) are Lumenal-facing. The disordered stretch occupies residues 48 to 70 (GAAPCSPAPREPEAPTSANGSAG). Residues Asn66, Asn156, and Asn312 are each glycosylated (N-linked (GlcNAc...) asparagine).

It belongs to the galactose-3-O-sulfotransferase family.

It is found in the golgi apparatus membrane. The enzyme catalyses a beta-D-galactosyl-(1&lt;-&gt;1')-N-acylsphing-4-enine + 3'-phosphoadenylyl sulfate = an N-acyl-1-beta-D-(3-O-sulfo)-galactosyl-sphing-4-enine + adenosine 3',5'-bisphosphate + H(+). It catalyses the reaction a 1-O-alkyl-2-acyl-3-O-(beta-D-galactosyl)-sn-glycerol + 3'-phosphoadenylyl sulfate = a 1-O-alkyl-2-acyl-3-(beta-D-3-sulfogalactosyl)-sn-glycerol + adenosine 3',5'-bisphosphate + H(+). The catalysed reaction is a beta-D-Gal-(1&lt;-&gt;1')-ceramide + 3'-phosphoadenylyl sulfate = 1-(3-O-sulfo-beta-D-galactosyl)-ceramide + adenosine 3',5'-bisphosphate + H(+). It carries out the reaction a 1,2-diacyl-3-O-(beta-D-galactosyl)-sn-glycerol + 3'-phosphoadenylyl sulfate = 1,2-diacyl-3-(3-O-sulfo-beta-D-galactosyl)-sn-glycerol + adenosine 3',5'-bisphosphate + H(+). The enzyme catalyses a beta-D-Gal-(1-&gt;4)-beta-D-Glc-(1&lt;-&gt;1)-Cer(d18:1(4E)) + 3'-phosphoadenylyl sulfate = beta-D-3-sulfogalactosyl-(1-&gt;4)-beta-D-glucosyl-(1&lt;-&gt;1')-N-acylsphing-4-enine + adenosine 3',5'-bisphosphate + H(+). The protein operates within lipid metabolism; sphingolipid metabolism. Functionally, catalyzes the transfer of a sulfate group to position 3 of non-reducing beta-galactosyl residues in glycerolipids and sphingolipids, therefore participates in the biosynthesis of sulfoglycolipids. Catalyzes the synthesis of galactosylceramide sulfate (sulfatide), a major lipid component of the myelin sheath and of monogalactosylalkylacylglycerol sulfate (seminolipid), present in spermatocytes. Seems to prefer beta-glycosides at the non-reducing termini of sugar chains attached to a lipid moiety. Also acts on lactosylceramide, galactosyl 1-alkyl-2-sn-glycerol and galactosyl diacylglycerol (in vitro). The protein is Galactosylceramide sulfotransferase of Bos taurus (Bovine).